Here is a 91-residue protein sequence, read N- to C-terminus: Small ribosomal subunit protein uS15 (91 aa).

The protein belongs to the universal ribosomal protein uS15 family. Part of the 30S ribosomal subunit. Forms a bridge to the 50S subunit in the 70S ribosome, contacting the 23S rRNA.

In terms of biological role, one of the primary rRNA binding proteins, it binds directly to 16S rRNA where it helps nucleate assembly of the platform of the 30S subunit by binding and bridging several RNA helices of the 16S rRNA. Its function is as follows. Forms an intersubunit bridge (bridge B4) with the 23S rRNA of the 50S subunit in the ribosome. This is Small ribosomal subunit protein uS15 from Amoebophilus asiaticus (strain 5a2).